Here is a 229-residue protein sequence, read N- to C-terminus: Prolactin (229 aa).

A signal peptide spans 1–30; that stretch reads MDKKRSSLKGSLLLLLLLVSDLLLCKSVAS. Cysteine 34 and cysteine 41 are disulfide-bonded. Residue serine 56 is modified to Phosphoserine. N-linked (GlcNAc...) asparagine; partial glycosylation occurs at asparagine 61. Serine 64 and serine 120 each carry phosphoserine. Disulfide bonds link cysteine 88-cysteine 204 and cysteine 221-cysteine 229.

It belongs to the somatotropin/prolactin family. In terms of assembly, interacts with PRLR.

The protein localises to the secreted. Functionally, prolactin acts primarily on the mammary gland by promoting lactation. This Equus caballus (Horse) protein is Prolactin (PRL).